A 531-amino-acid chain; its full sequence is Coiled-coil domain-containing protein 9 (531 aa).

The segment at 40–531 is disordered; that stretch reads EDRKKAELEG…PGEAWPFESV (492 aa). The span at 59-72 shows a compositional bias: basic and acidic residues; sequence RSVEKENVAVESEK. Ser-80 carries the post-translational modification Phosphoserine. Thr-95 carries the post-translational modification Phosphothreonine. Arg-107 is modified (omega-N-methylarginine). Position 111 is a phosphoserine (Ser-111). Omega-N-methylarginine is present on residues Arg-121, Arg-128, and Arg-130. Asymmetric dimethylarginine is present on residues Arg-131, Arg-133, and Arg-135. Ser-137 carries the phosphoserine modification. 3 stretches are compositionally biased toward basic and acidic residues: residues 148–185, 194–217, and 227–241; these read ISDR…REGV, FLDD…EESR, and DFER…ERQG. Positions 149–185 form a coiled coil; it reads SDRKSKEWEERRRQNIEKMNEEMEKIAEYERNQREGV. At Ser-202 the chain carries Phosphoserine. Phosphoserine occurs at positions 248 and 255. 4 stretches are compositionally biased toward basic and acidic residues: residues 258-279, 289-302, 311-320, and 361-372; these read GRER…QERL, WRRE…DGMF, EPSHRYDDQA, and YSDHDDRWETKE. Ser-376, Ser-386, and Ser-390 each carry phosphoserine. Positions 386 to 395 are enriched in low complexity; sequence SPETSPKETP. The span at 396–406 shows a compositional bias: pro residues; it reads MQPPEIPAPAH. The span at 411–446 shows a compositional bias: acidic residues; it reads DEGEENEGEEDEEWEDISEDEEEEEIEVEEGDEEEP. Position 521 is a phosphoserine (Ser-521).

As to quaternary structure, probable component of the exon junction complex (EJC); the association is RNA-dependent.

Probable component of the exon junction complex (EJC), a multiprotein complex that associates immediately upstream of the exon-exon junction on mRNAs and serves as a positional landmark for the intron exon structure of genes and directs post-transcriptional processes in the cytoplasm such as mRNA export, nonsense-mediated mRNA decay (NMD) or translation. The sequence is that of Coiled-coil domain-containing protein 9 from Homo sapiens (Human).